The chain runs to 444 residues: Cytokine receptor-like factor 3 (444 aa).

A coiled-coil region spans residues 1–65 (MSIEAEALLQ…QELQTAVSRL (65 aa)). The Fibronectin type-III domain occupies 177–270 (PPVQIEELVE…PQTGYTTLAP (94 aa)).

The protein belongs to the cytokine receptor-like factor 3 family.

The protein resides in the cytoplasm. May play a role in the negative regulation of cell cycle progression. This is Cytokine receptor-like factor 3 (crlf3) from Danio rerio (Zebrafish).